The following is a 463-amino-acid chain: Lactadherin (463 aa).

The signal sequence occupies residues 1 to 22 (MQVSRVLAALCGMLLCASGLFA). 2 consecutive EGF-like domains span residues 24 to 61 (SGDF…LVCN) and 64 to 108 (ERGP…IHCE). 3 disulfides stabilise this stretch: C28–C39, C33–C49, and C51–C60. N61 carries an N-linked (GlcNAc...) asparagine glycan. Cystine bridges form between C68-C79, C73-C96, C98-C107, C148-C303, C290-C294, and C308-C463. The Cell attachment site motif lies at 87–89 (RGD). F5/8 type C domains follow at residues 148 to 303 (CSTQ…LLGC) and 308 to 463 (CSEP…LLGC). An N-linked (GlcNAc...) asparagine glycan is attached at N266. 2 N-linked (GlcNAc...) asparagine glycosylation sites follow: N316 and N426.

In terms of processing, N-glycosylated. Isoform 1 also exists in both an O-glycosylated and a non-O-glycosylated form. In terms of tissue distribution, mammary epithelial cell surfaces and spermatozoan. Isoform 2 is present in brain, heart, kidney and spleen and at low levels in lung, liver, small intestine and testis.

It is found in the membrane. Its subcellular location is the secreted. The protein localises to the cytoplasmic vesicle. The protein resides in the secretory vesicle. It localises to the acrosome membrane. In terms of biological role, contributes to phagocytic removal of apoptotic cells in many tissues. Specific ligand for the alpha-v/beta-3 and alpha-v/beta-5 receptors. Also binds to phosphatidylserine-enriched cell surfaces in a receptor-independent manner. Zona pellucida-binding protein which may play a role in gamete interaction. Plays an important role in the maintenance of intestinal epithelial homeostasis and the promotion of mucosal healing. Promotes VEGF-dependent neovascularization. This chain is Lactadherin (Mfge8), found in Mus musculus (Mouse).